Here is a 344-residue protein sequence, read N- to C-terminus: N-acetyl-gamma-glutamyl-phosphate reductase (344 aa).

C150 is a catalytic residue.

This sequence belongs to the NAGSA dehydrogenase family. Type 1 subfamily.

The protein resides in the cytoplasm. The enzyme catalyses N-acetyl-L-glutamate 5-semialdehyde + phosphate + NADP(+) = N-acetyl-L-glutamyl 5-phosphate + NADPH + H(+). It functions in the pathway amino-acid biosynthesis; L-arginine biosynthesis; N(2)-acetyl-L-ornithine from L-glutamate: step 3/4. Functionally, catalyzes the NADPH-dependent reduction of N-acetyl-5-glutamyl phosphate to yield N-acetyl-L-glutamate 5-semialdehyde. The chain is N-acetyl-gamma-glutamyl-phosphate reductase from Ectopseudomonas mendocina (strain ymp) (Pseudomonas mendocina).